Here is a 669-residue protein sequence, read N- to C-terminus: Heat shock 70 kDa protein BIP3 (669 aa).

The signal sequence occupies residues 1-32 (MARGATWTRRLHLHGLFLAVLLLLTLPAGSTA). N423 carries an N-linked (GlcNAc...) asparagine glycan. Positions 646 to 669 (AVYQRSGGSRRDGDGGGDDDHDEL) are disordered. The span at 660 to 669 (GGGDDDHDEL) shows a compositional bias: acidic residues. The short motif at 666–669 (HDEL) is the Prevents secretion from ER element.

The protein belongs to the heat shock protein 70 family.

It localises to the endoplasmic reticulum. In terms of biological role, functions as a chaperone during endoplasmic reticulum (ER) stress response. In Oryza sativa subsp. japonica (Rice), this protein is Heat shock 70 kDa protein BIP3.